The primary structure comprises 273 residues: Probable branched-chain-amino-acid aminotransferase (273 aa).

Lysine 133 is subject to N6-(pyridoxal phosphate)lysine.

Belongs to the class-IV pyridoxal-phosphate-dependent aminotransferase family. The cofactor is pyridoxal 5'-phosphate.

The enzyme catalyses L-leucine + 2-oxoglutarate = 4-methyl-2-oxopentanoate + L-glutamate. The catalysed reaction is L-isoleucine + 2-oxoglutarate = (S)-3-methyl-2-oxopentanoate + L-glutamate. It catalyses the reaction L-valine + 2-oxoglutarate = 3-methyl-2-oxobutanoate + L-glutamate. Its pathway is amino-acid biosynthesis; L-isoleucine biosynthesis; L-isoleucine from 2-oxobutanoate: step 4/4. It participates in amino-acid biosynthesis; L-leucine biosynthesis; L-leucine from 3-methyl-2-oxobutanoate: step 4/4. The protein operates within amino-acid biosynthesis; L-valine biosynthesis; L-valine from pyruvate: step 4/4. In terms of biological role, acts on leucine, isoleucine and valine. The polypeptide is Probable branched-chain-amino-acid aminotransferase (ilvE) (Thermotoga maritima (strain ATCC 43589 / DSM 3109 / JCM 10099 / NBRC 100826 / MSB8)).